Reading from the N-terminus, the 63-residue chain is Large ribosomal subunit protein uL29 (63 aa).

The protein belongs to the universal ribosomal protein uL29 family.

The sequence is that of Large ribosomal subunit protein uL29 from Bordetella avium (strain 197N).